The following is a 420-amino-acid chain: METFDPTELPELLKLYYRRLFPYSQYYRWLNYGGVIKNYFQHREFSFTLKDDIYIRYQSFNNQSDLEKEMQKMNPYKIDIGAVYSHRPNQHNTVKLGAFQAQEKELVFDIDMTDYDDVRRCCSSADICPKCWTLMTMAIRIIDRALKEDFGFKHRLWVYSGRRGVHCWVCDESVRKLSSAVRSGIVEYLSLVKGGQDVKKKVHLSEKIHPFIRKSINIIKKYFEEYALVNQDILENKESWDKILALVPETIHDELQQSFQKSHNSLQRWEHLKKVASRYQNNIKNDKYGPWLEWEIMLQYCFPRLDINVSKGINHLLKSPFSVHPKTGRISVPIDLQKVDQFDPFTVPTISFICRELDAISTNEEEKEENEAESDVKHRTRDYKKTSLAPYVKVFEHFLENLDKSRKGELLKKSDLQKDF.

M1 carries the N-acetylmethionine modification. Active-site residues include E44, D109, and D111. 2 residues coordinate Mg(2+): D109 and D111. Positions 109 and 111 each coordinate Mn(2+). Residue D109–D111 participates in a ribonucleoside 5'-triphosphate binding. The Zn(2+) site is built by C121, C122, C128, and C131. A Zinc knuckle motif motif is present at residues C121 to C131. S160–H166 contacts a ribonucleoside 5'-triphosphate. A Mg(2+)-binding site is contributed by D306. Position 306 (D306) interacts with Mn(2+). Residues H315–K318 and H324 contribute to the a ribonucleoside 5'-triphosphate site. Residues N363 to E373 show a composition bias toward acidic residues. The tract at residues N363–D382 is disordered.

It belongs to the eukaryotic-type primase small subunit family. As to quaternary structure, heterodimer of a catalytic subunit PRIM1 and a regulatory subunit PRIM2, also known as the DNA primase complex. Interacts with PRIM2 (via C-terminus). Component of the alpha DNA polymerase complex (also known as the alpha DNA polymerase-primase complex) consisting of four subunits: the catalytic subunit POLA1, the regulatory subunit POLA2, and the primase complex subunits PRIM1 and PRIM2 respectively. Within the complex, POLA1 directly interacts with PRIM2. Mg(2+) is required as a cofactor. Requires Mn(2+) as cofactor.

It carries out the reaction ssDNA + n NTP = ssDNA/pppN(pN)n-1 hybrid + (n-1) diphosphate.. Its activity is regulated as follows. The presence of the regulatory subunit PRIM2/p58 accelerates the kinetics of initiation and primer extension. Inhibited by arabinose nucleoside derivatives such as fludarabine and vidarabine. Catalytic subunit of the DNA primase complex and component of the DNA polymerase alpha complex (also known as the alpha DNA polymerase-primase complex - primosome/replisome) which play an essential role in the initiation of DNA synthesis. During the S phase of the cell cycle, the DNA polymerase alpha complex (composed of a catalytic subunit POLA1, an accessory subunit POLA2 and two primase subunits, the catalytic subunit PRIM1 and the regulatory subunit PRIM2) is recruited to DNA at the replicative forks via direct interactions with MCM10 and WDHD1. The primase subunit of the polymerase alpha complex initiates DNA synthesis by oligomerising short RNA primers on both leading and lagging strands. These primers are initially extended by the polymerase alpha catalytic subunit and subsequently transferred to polymerase delta and polymerase epsilon for processive synthesis on the lagging and leading strand, respectively. In the primase complex, both subunits are necessary for the initial di-nucleotide formation, but the extension of the primer depends only on the catalytic subunit. Synthesizes 9-mer RNA primers (also known as the 'unit length' RNA primers). Incorporates only ribonucleotides in the presence of ribo- and deoxy-nucleotide triphosphates (rNTPs, dNTPs). Requires template thymine or cytidine to start the RNA primer synthesis, with an adenine or guanine at its 5'-end. Binds single stranded DNA. In Homo sapiens (Human), this protein is DNA primase small subunit (PRIM1).